Reading from the N-terminus, the 115-residue chain is Protein Wnt-2 (115 aa).

Ser1 is lipidated: O-palmitoleoyl serine; by PORCN. Cysteines 81 and 96 form a disulfide. A glycan (N-linked (GlcNAc...) asparagine) is linked at Asn82.

It belongs to the Wnt family. In terms of processing, palmitoleoylation is required for efficient binding to frizzled receptors. Depalmitoleoylation leads to Wnt signaling pathway inhibition.

The protein resides in the secreted. It is found in the extracellular space. Its subcellular location is the extracellular matrix. Its function is as follows. Ligand for members of the frizzled family of seven transmembrane receptors. Probable developmental protein. May be a signaling molecule which affects the development of discrete regions of tissues. Is likely to signal over only few cell diameters. This Strongylocentrotus purpuratus (Purple sea urchin) protein is Protein Wnt-2 (WNT-2).